The following is a 912-amino-acid chain: Protein translocase subunit SecA (912 aa).

ATP contacts are provided by residues Q87, 105–109 (GEGKT), and D508. The tract at residues 864 to 912 (AEEEVEQMQGGNAPVPVSQVTRDEPKVGRNDPCPCGSGKKYKHCHGQLS) is disordered. Zn(2+) contacts are provided by C896, C898, C907, and H908. Positions 902–912 (KKYKHCHGQLS) are enriched in basic residues.

Belongs to the SecA family. Monomer and homodimer. Part of the essential Sec protein translocation apparatus which comprises SecA, SecYEG and auxiliary proteins SecDF-YajC and YidC. Requires Zn(2+) as cofactor.

The protein localises to the cell inner membrane. Its subcellular location is the cytoplasm. The catalysed reaction is ATP + H2O + cellular proteinSide 1 = ADP + phosphate + cellular proteinSide 2.. Functionally, part of the Sec protein translocase complex. Interacts with the SecYEG preprotein conducting channel. Has a central role in coupling the hydrolysis of ATP to the transfer of proteins into and across the cell membrane, serving both as a receptor for the preprotein-SecB complex and as an ATP-driven molecular motor driving the stepwise translocation of polypeptide chains across the membrane. The polypeptide is Protein translocase subunit SecA (Xanthomonas euvesicatoria pv. vesicatoria (strain 85-10) (Xanthomonas campestris pv. vesicatoria)).